A 327-amino-acid chain; its full sequence is MERKVSRISLASEPNITYFLQVSWEETVGSGFVITLTDGHSAWTATVSESEISQEADDMAMEKEKYADELRKALVSGSGSDTYKFIFSRESCHFSLEKELKDVSFRLGSFNLDKVPNSTEVIRELICYCLDTIAEKQAKNEHLQKENDRLLRDWNDVQGRFEKCVIAKEALEADLYQRFILVLNEKKTKIRSLHKLLDEIQQLEKNLKPERETKCSEKTTDQDAIYDGSTDEEAGASVLAEAAVCKEDSLFSSPDVTDIAPSRKRRHHMQKNLGTEPKMAPQEQQLQGKERLASSLPHTLKEEHEHTSAGNMSLETLRNSSPEDIFD.

An interaction with IFFO1 region spans residues 1-211; sequence MERKVSRISL…QLEKNLKPER (211 aa). Ser-53 carries the phosphoserine modification. 2 coiled-coil regions span residues 133-153 and 183-213; these read IAEK…LLRD and LNEK…ERET. Interaction with LIG4 regions lie at residues 179 to 210 and 179 to 211; these read FILV…LKPE and FILV…KPER. Phosphoserine is present on Ser-192. Residue Lys-208 forms a Glycyl lysine isopeptide (Lys-Gly) (interchain with G-Cter in SUMO) linkage. The residue at position 226 (Tyr-226) is a Phosphotyrosine. Ser-229 carries the phosphoserine modification. The residue at position 230 (Thr-230) is a Phosphothreonine. Ser-249 and Ser-253 each carry phosphoserine. Residues 255–327 form a disordered region; sequence DVTDIAPSRK…RNSSPEDIFD (73 aa). Positions 263–268 match the Nuclear localization signal motif; the sequence is RKRRHH. Lys-289 participates in a covalent cross-link: Glycyl lysine isopeptide (Lys-Gly) (interchain with G-Cter in ubiquitin). A phosphoserine mark is found at Ser-294, Ser-295, Ser-308, and Ser-313. The segment covering 308 to 327 has biased composition (polar residues); the sequence is SAGNMSLETLRNSSPEDIFD. Thr-316 is modified (phosphothreonine). 2 positions are modified to phosphoserine: Ser-320 and Ser-321.

It belongs to the XRCC4-XLF family. XRCC4 subfamily. As to quaternary structure, homodimer and homotetramer in solution. Interacts with NHEJ1/XLF; the interaction is direct and is mediated via a head-to-head interaction between N-terminal head regions. Interacts with LIG4; the LIG4-XRCC4 subcomplex has a 1:2 stoichiometry and XRCC4 is required for LIG4 stability. Component of the core long-range non-homologous end joining (NHEJ) complex (also named DNA-PK complex) composed of PRKDC, LIG4, XRCC4, XRCC6/Ku70, XRCC5/Ku86 and NHEJ1/XLF. Additional component of the NHEJ complex includes PAXX. Following autophosphorylation, PRKDC dissociates from DNA, leading to formation of the short-range NHEJ complex, composed of LIG4, XRCC4, XRCC6/Ku70, XRCC5/Ku86 and NHEJ1/XLF. Interacts with PRKDC; the interaction is direct. Interacts with XRCC6/Ku70; the interaction is direct. Interacts with APTX and APLF. Forms a heterotetramer with IFFO1; the interaction involves LIG4-free XRCC4 and leads to the relocalization of IFFO1 to the sites of DNA damage. Interacts with PNKP; mainly interacts with PNKP when phosphorylated at Thr-230, but is also able to interact at much lower level with PNKP when not unphosphorylated. Interacts with POLL (DNA polymerase lambda). In terms of assembly, interacts with XKR4; interacts with the processed form of XKR4, which is cleaved by caspase. Post-translationally, phosphorylated by PRKDC at the C-terminus in response to DNA damage; Ser-253 constitutes the main phosphorylation sites. Phosphorylations by PRKDC at the C-terminus of XRCC4 and NHEJ1/XLF are highly redundant and regulate ability of the XRCC4-NHEJ1/XLF subcomplex to bridge DNA. Phosphorylation by PRKDC does not prevent interaction with NHEJ1/XLF but disrupts ability to bridge DNA and promotes detachment from DNA. Phosphorylation at Ser-320 and Ser-321 by PRKDC promotes recognition by the SCF(FBXW7) complex and subsequent ubiquitination via 'Lys-63'-linked ubiquitin. Phosphorylation at Thr-230 by CK2 promotes interaction with PNKP; regulating PNKP activity and localization to DNA damage sites. Phosphorylation by CK2 promotes interaction with APTX. In terms of processing, ubiquitinated at Lys-289 by the SCF(FBXW7) complex via 'Lys-63'-linked ubiquitination, thereby promoting double-strand break repair: the SCF(FBXW7) complex specifically recognizes XRCC4 when phosphorylated at Ser-320 and Ser-321 by PRKDC, and 'Lys-63'-linked ubiquitination facilitates DNA non-homologous end joining (NHEJ) by enhancing association with XRCC5/Ku80 and XRCC6/Ku70. Monoubiquitinated. Undergoes proteolytic processing by caspase-3 (CASP3). This generates the protein XRCC4, C-terminus (XRCC4/C), which translocates to the cytoplasm and activates phospholipid scramblase activity of XKR4, thereby promoting phosphatidylserine exposure on apoptotic cell surface.

The protein resides in the nucleus. Its subcellular location is the chromosome. The protein localises to the cytoplasm. Functionally, DNA non-homologous end joining (NHEJ) core factor, required for double-strand break repair and V(D)J recombination. Acts as a scaffold protein that regulates recruitment of other proteins to DNA double-strand breaks (DSBs). Associates with NHEJ1/XLF to form alternating helical filaments that bridge DNA and act like a bandage, holding together the broken DNA until it is repaired. The XRCC4-NHEJ1/XLF subcomplex binds to the DNA fragments of a DSB in a highly diffusive manner and robustly bridges two independent DNA molecules, holding the broken DNA fragments in close proximity to one other. The mobility of the bridges ensures that the ends remain accessible for further processing by other repair factors. Plays a key role in the NHEJ ligation step of the broken DNA during DSB repair via direct interaction with DNA ligase IV (LIG4): the LIG4-XRCC4 subcomplex reseals the DNA breaks after the gap filling is completed. XRCC4 stabilizes LIG4, regulates its subcellular localization and enhances LIG4's joining activity. Binding of the LIG4-XRCC4 subcomplex to DNA ends is dependent on the assembly of the DNA-dependent protein kinase complex DNA-PK to these DNA ends. Promotes displacement of PNKP from processed strand break termini. In terms of biological role, acts as an activator of the phospholipid scramblase activity of XKR4. This form, which is generated upon caspase-3 (CASP3) cleavage, translocates into the cytoplasm and interacts with XKR4, thereby promoting phosphatidylserine scramblase activity of XKR4 and leading to phosphatidylserine exposure on apoptotic cell surface. This Cricetulus griseus (Chinese hamster) protein is DNA repair protein XRCC4.